Reading from the N-terminus, the 248-residue chain is DNA repair protein RecO (248 aa).

Belongs to the RecO family.

Functionally, involved in DNA repair and RecF pathway recombination. In Bartonella tribocorum (strain CIP 105476 / IBS 506), this protein is DNA repair protein RecO.